Reading from the N-terminus, the 2224-residue chain is Multifunctional protein r (2224 aa).

The tract at residues 1–369 (MASTDCYLAL…PQDTEFLFDV (369 aa)) is GATase (Glutamine amidotransferase). Serine 55, glycine 240, and glycine 242 together coordinate L-glutamine. The Glutamine amidotransferase type-1 domain maps to 195–380 (RIAILDCGLK…MESIQQKDLT (186 aa)). Cysteine 269 acts as the Nucleophile; for GATase activity in catalysis. Residues leucine 270, glutamine 273, asparagine 311, glycine 313, and tyrosine 314 each contribute to the L-glutamine site. Active-site for GATase activity residues include histidine 353 and glutamate 355. The segment at 370 to 415 (FMESIQQKDLTIPQLIEQRLRPTTPAIDSAPVMPRKVLILGSGGLS) is linker. The interval 416-1470 (IGQAGEFDYS…KPPMKTHTDC (1055 aa)) is CPSase (Carbamoyl-phosphate synthase). 11 residues coordinate ATP: arginine 525, arginine 565, glycine 571, glycine 572, lysine 602, glutamate 609, glycine 635, isoleucine 636, histidine 637, glutamine 678, and glutamate 692. ATP-grasp domains lie at 529–721 (AERV…KLAL) and 1066–1257 (SRML…RAIV). Residues glutamine 678, glutamate 692, and asparagine 694 each coordinate Mg(2+). Mn(2+) contacts are provided by glutamine 678, glutamate 692, and asparagine 694. Residues arginine 1102, lysine 1141, leucine 1143, glutamate 1148, glycine 1173, valine 1174, histidine 1175, serine 1176, glutamine 1216, and glutamate 1228 each contribute to the ATP site. Mg(2+) is bound by residues glutamine 1216, glutamate 1228, and asparagine 1230. Glutamine 1216, glutamate 1228, and asparagine 1230 together coordinate Mn(2+). The 156-residue stretch at 1322–1477 (FQIPKNAVLL…TDCMTSRRIV (156 aa)) folds into the MGS-like domain. The interval 1471 to 1484 (MTSRRIVKLPGFID) is linker. The interval 1485 to 1800 (VHVHLREPGA…GTKVKGRVHR (316 aa)) is DHOase (dihydroorotase). 2 residues coordinate Zn(2+): histidine 1486 and histidine 1488. Positions 1490 and 1520 each coordinate (S)-dihydroorotate. Residues lysine 1571, histidine 1605, cysteine 1628, histidine 1629, and glutamate 1652 each coordinate Zn(2+). Position 1571 is an N6-carboxylysine (lysine 1571). Arginine 1676 contacts (S)-dihydroorotate. Aspartate 1701 contacts Zn(2+). Aspartate 1701 functions as the For DHOase activity in the catalytic mechanism. 2 residues coordinate (S)-dihydroorotate: histidine 1705 and proline 1717. A linker region spans residues 1801–1912 (VVLRGEVAFV…QRTTNSNPVA (112 aa)). Residues 1821–1843 (GQNVRPKQSPLASEASQDLLPSD) form a disordered region. Serine 1883, serine 1885, serine 1892, and serine 1894 each carry phosphoserine. The tract at residues 1913 to 2224 (HSLMGKHILA…MVVGGRNTAL (312 aa)) is ATCase (Aspartate transcarbamylase). 2 residues coordinate carbamoyl phosphate: arginine 1970 and threonine 1971. Lysine 1998 is a binding site for L-aspartate. Carbamoyl phosphate contacts are provided by arginine 2019, histidine 2047, and glutamine 2050. The L-aspartate site is built by arginine 2080 and arginine 2141. The carbamoyl phosphate site is built by leucine 2180 and proline 2181.

In the N-terminal section; belongs to the CarA family. The protein in the 2nd section; belongs to the CarB family. This sequence in the 3rd section; belongs to the metallo-dependent hydrolases superfamily. DHOase family. CAD subfamily. It in the C-terminal section; belongs to the aspartate/ornithine carbamoyltransferase superfamily. ATCase family. The cofactor is Mg(2+). Mn(2+) is required as a cofactor. Requires Zn(2+) as cofactor.

The protein localises to the cytoplasm. The enzyme catalyses hydrogencarbonate + L-glutamine + 2 ATP + H2O = carbamoyl phosphate + L-glutamate + 2 ADP + phosphate + 2 H(+). It catalyses the reaction L-glutamine + H2O = L-glutamate + NH4(+). It carries out the reaction hydrogencarbonate + NH4(+) + 2 ATP = carbamoyl phosphate + 2 ADP + phosphate + 2 H(+). The catalysed reaction is carbamoyl phosphate + L-aspartate = N-carbamoyl-L-aspartate + phosphate + H(+). The enzyme catalyses (S)-dihydroorotate + H2O = N-carbamoyl-L-aspartate + H(+). Its pathway is pyrimidine metabolism; UMP biosynthesis via de novo pathway; (S)-dihydroorotate from bicarbonate: step 1/3. The protein operates within pyrimidine metabolism; UMP biosynthesis via de novo pathway; (S)-dihydroorotate from bicarbonate: step 2/3. It participates in pyrimidine metabolism; UMP biosynthesis via de novo pathway; (S)-dihydroorotate from bicarbonate: step 3/3. In terms of biological role, multifunctional protein that encodes the first 3 enzymatic activities of the de novo pyrimidine pathway: carbamoylphosphate synthetase (CPSase; EC 6.3.5.5), aspartate transcarbamylase (ATCase; EC 2.1.3.2) and dihydroorotase (DHOase; EC 3.5.2.3). The CPSase-function is accomplished in 2 steps, by a glutamine-dependent amidotransferase activity (GATase) that binds and cleaves glutamine to produce ammonia, followed by an ammonium-dependent carbamoyl phosphate synthetase, which reacts with the ammonia, hydrogencarbonate and ATP to form carbamoyl phosphate. The endogenously produced carbamoyl phosphate is sequestered and channeled to the ATCase active site. ATCase then catalyzes the formation of carbamoyl-L-aspartate from L-aspartate and carbamoyl phosphate. In the last step, DHOase catalyzes the cyclization of carbamoyl aspartate to dihydroorotate. The protein is Multifunctional protein r (r) of Drosophila melanogaster (Fruit fly).